Here is a 200-residue protein sequence, read N- to C-terminus: ATP-dependent Clp protease proteolytic subunit 2 (200 aa).

The Nucleophile role is filled by S100.

This sequence belongs to the peptidase S14 family. As to quaternary structure, fourteen ClpP subunits assemble into 2 heptameric rings which stack back to back to give a disk-like structure with a central cavity, resembling the structure of eukaryotic proteasomes.

Its subcellular location is the cytoplasm. The enzyme catalyses Hydrolysis of proteins to small peptides in the presence of ATP and magnesium. alpha-casein is the usual test substrate. In the absence of ATP, only oligopeptides shorter than five residues are hydrolyzed (such as succinyl-Leu-Tyr-|-NHMec, and Leu-Tyr-Leu-|-Tyr-Trp, in which cleavage of the -Tyr-|-Leu- and -Tyr-|-Trp bonds also occurs).. Cleaves peptides in various proteins in a process that requires ATP hydrolysis. Has a chymotrypsin-like activity. Plays a major role in the degradation of misfolded proteins. The polypeptide is ATP-dependent Clp protease proteolytic subunit 2 (Streptomyces avermitilis (strain ATCC 31267 / DSM 46492 / JCM 5070 / NBRC 14893 / NCIMB 12804 / NRRL 8165 / MA-4680)).